A 634-amino-acid chain; its full sequence is 1-deoxy-D-xylulose-5-phosphate synthase (634 aa).

Thiamine diphosphate-binding positions include His79 and 120-122 (GHA). A Mg(2+)-binding site is contributed by Asp151. Thiamine diphosphate contacts are provided by residues 152 to 153 (GS), Asn180, Tyr292, and Glu376. Asn180 contacts Mg(2+).

Belongs to the transketolase family. DXPS subfamily. Homodimer. Mg(2+) serves as cofactor. It depends on thiamine diphosphate as a cofactor.

The catalysed reaction is D-glyceraldehyde 3-phosphate + pyruvate + H(+) = 1-deoxy-D-xylulose 5-phosphate + CO2. Its pathway is metabolic intermediate biosynthesis; 1-deoxy-D-xylulose 5-phosphate biosynthesis; 1-deoxy-D-xylulose 5-phosphate from D-glyceraldehyde 3-phosphate and pyruvate: step 1/1. In terms of biological role, catalyzes the acyloin condensation reaction between C atoms 2 and 3 of pyruvate and glyceraldehyde 3-phosphate to yield 1-deoxy-D-xylulose-5-phosphate (DXP). In Porphyromonas gingivalis (strain ATCC BAA-308 / W83), this protein is 1-deoxy-D-xylulose-5-phosphate synthase.